The following is a 583-amino-acid chain: Aspartate--tRNA ligase (583 aa).

L-aspartate is bound at residue Glu-174. Positions 198–201 (QTFK) are aspartate. Residue Arg-220 participates in L-aspartate binding. Residues 220–222 (RDE) and Gln-229 each bind ATP. His-445 is a binding site for L-aspartate. ATP is bound at residue Glu-479. Arg-486 contacts L-aspartate. Residue 531–534 (GLDR) coordinates ATP.

The protein belongs to the class-II aminoacyl-tRNA synthetase family. Type 1 subfamily. In terms of assembly, homodimer.

Its subcellular location is the cytoplasm. It carries out the reaction tRNA(Asp) + L-aspartate + ATP = L-aspartyl-tRNA(Asp) + AMP + diphosphate. In terms of biological role, catalyzes the attachment of L-aspartate to tRNA(Asp) in a two-step reaction: L-aspartate is first activated by ATP to form Asp-AMP and then transferred to the acceptor end of tRNA(Asp). The polypeptide is Aspartate--tRNA ligase (Flavobacterium psychrophilum (strain ATCC 49511 / DSM 21280 / CIP 103535 / JIP02/86)).